Reading from the N-terminus, the 602-residue chain is Glutaminase liver isoform, mitochondrial (602 aa).

The N-terminal 14 residues, 1 to 14 (MRSMRALQNALSRA), are a transit peptide targeting the mitochondrion. Disordered stretches follow at residues 1-28 (MRSM…HPSR) and 46-67 (QGRG…SNSG). Ser-219 contacts substrate. Lys-253 bears the N6-succinyllysine mark. Asn-268 serves as a coordination point for substrate. Residues Lys-279 and Lys-284 each carry the N6-acetyllysine modification. 2 residues coordinate substrate: Glu-314 and Asn-321. Residue Lys-329 is modified to N6-acetyllysine. Substrate-binding residues include Tyr-347, Tyr-399, and Val-417. ANK repeat units lie at residues 518-551 (DSRT…VKDR) and 552-585 (WGNI…SETQ).

It belongs to the glutaminase family. Homotetramer, dimer of dimers. Does not assemble into higher oligomers. Interacts with the PDZ domain of the syntrophin SNTA1. Interacts with the PDZ domain of TAX1BP3. As to expression, liver specific.

The protein resides in the mitochondrion. The enzyme catalyses L-glutamine + H2O = L-glutamate + NH4(+). Its function is as follows. Plays an important role in the regulation of glutamine catabolism. Promotes mitochondrial respiration and increases ATP generation in cells by catalyzing the synthesis of glutamate and alpha-ketoglutarate. Increases cellular anti-oxidant function via NADH and glutathione production. May play a role in preventing tumor proliferation. The chain is Glutaminase liver isoform, mitochondrial (Gls2) from Rattus norvegicus (Rat).